The sequence spans 864 residues: Leucine--tRNA ligase (864 aa).

The 'HIGH' region motif lies at 42 to 52; that stretch reads PYPSGKLHMGH. The 'KMSKS' region motif lies at 622–626; that stretch reads KMSKS. K625 lines the ATP pocket.

This sequence belongs to the class-I aminoacyl-tRNA synthetase family.

It localises to the cytoplasm. The enzyme catalyses tRNA(Leu) + L-leucine + ATP = L-leucyl-tRNA(Leu) + AMP + diphosphate. This Cellvibrio japonicus (strain Ueda107) (Pseudomonas fluorescens subsp. cellulosa) protein is Leucine--tRNA ligase.